Reading from the N-terminus, the 212-residue chain is Large ribosomal subunit protein uL1 (212 aa).

This sequence belongs to the universal ribosomal protein uL1 family. As to quaternary structure, part of the 50S ribosomal subunit.

In terms of biological role, binds directly to 23S rRNA. Probably involved in E site tRNA release. Functionally, protein L1 is also a translational repressor protein, it controls the translation of its operon by binding to its mRNA. The chain is Large ribosomal subunit protein uL1 from Methanothermobacter thermautotrophicus (strain ATCC 29096 / DSM 1053 / JCM 10044 / NBRC 100330 / Delta H) (Methanobacterium thermoautotrophicum).